The primary structure comprises 881 residues: Translation initiation factor IF-2 (881 aa).

2 disordered regions span residues 53–92 and 163–292; these read RSHGKPEQAPEESDQSAKKITLNRRKQQEVTVNSGRSKTT and AEAE…FERP. Residues 81 to 92 show a composition bias toward polar residues; that stretch reads EVTVNSGRSKTT. Positions 172–186 are enriched in low complexity; the sequence is EAAAAAKAAEALAAA. Basic and acidic residues predominate over residues 219–236; the sequence is RNDDRNNRSAPRNERGPG. Residues 254 to 263 are compositionally biased toward low complexity; sequence GNSNNSNTRG. Residues 380-549 enclose the tr-type G domain; sequence QRPPVVTIMG…SIQAELLELK (170 aa). The segment at 389-396 is G1; that stretch reads GHVDHGKT. A GTP-binding site is contributed by 389-396; sequence GHVDHGKT. The tract at residues 414-418 is G2; that stretch reads GITQH. The interval 435 to 438 is G3; it reads DTPG. GTP contacts are provided by residues 435 to 439 and 489 to 492; these read DTPGH and NKID. The interval 489 to 492 is G4; it reads NKID. Positions 525–527 are G5; the sequence is SAK.

It belongs to the TRAFAC class translation factor GTPase superfamily. Classic translation factor GTPase family. IF-2 subfamily.

It is found in the cytoplasm. Functionally, one of the essential components for the initiation of protein synthesis. Protects formylmethionyl-tRNA from spontaneous hydrolysis and promotes its binding to the 30S ribosomal subunits. Also involved in the hydrolysis of GTP during the formation of the 70S ribosomal complex. This chain is Translation initiation factor IF-2, found in Stenotrophomonas maltophilia (strain K279a).